The following is a 179-amino-acid chain: tRNA (cytidine(56)-2'-O)-methyltransferase (179 aa).

Position 84 (Leu-84) interacts with S-adenosyl-L-methionine.

Belongs to the aTrm56 family. Homodimer.

Its subcellular location is the cytoplasm. The enzyme catalyses cytidine(56) in tRNA + S-adenosyl-L-methionine = 2'-O-methylcytidine(56) in tRNA + S-adenosyl-L-homocysteine + H(+). In terms of biological role, specifically catalyzes the AdoMet-dependent 2'-O-ribose methylation of cytidine at position 56 in tRNAs. This chain is tRNA (cytidine(56)-2'-O)-methyltransferase, found in Methanothermobacter thermautotrophicus (strain ATCC 29096 / DSM 1053 / JCM 10044 / NBRC 100330 / Delta H) (Methanobacterium thermoautotrophicum).